Here is a 205-residue protein sequence, read N- to C-terminus: MENMKQVVVATKNMGKVREFAELFERFDLEVKSLHDFPHIEEVEETGETFEENAILKADSLSRQLNAIVIADDSGLIVDALNGKPGVYSARFAGEPKDDQANIDKVLQELNEVAFEKRKARFYCALAVAFPEGDKKPVIVNGTCEGFILEQRRGENGFGYDPIFYVEEYKKAMAELSSDEKNAISHRGRALRKLEEKIPEWFLGE.

Residue 11–16 coordinates substrate; it reads TKNMGK. Positions 44 and 73 each coordinate Mg(2+). Asp-73 serves as the catalytic Proton acceptor. Substrate contacts are provided by residues Ser-74, 158–161, Lys-181, and 186–187; these read FGYD and HR.

Belongs to the HAM1 NTPase family. Homodimer. Mg(2+) serves as cofactor.

The catalysed reaction is XTP + H2O = XMP + diphosphate + H(+). It carries out the reaction dITP + H2O = dIMP + diphosphate + H(+). The enzyme catalyses ITP + H2O = IMP + diphosphate + H(+). In terms of biological role, pyrophosphatase that catalyzes the hydrolysis of nucleoside triphosphates to their monophosphate derivatives, with a high preference for the non-canonical purine nucleotides XTP (xanthosine triphosphate), dITP (deoxyinosine triphosphate) and ITP. Seems to function as a house-cleaning enzyme that removes non-canonical purine nucleotides from the nucleotide pool, thus preventing their incorporation into DNA/RNA and avoiding chromosomal lesions. The chain is dITP/XTP pyrophosphatase from Bacillus thuringiensis subsp. konkukian (strain 97-27).